A 209-amino-acid chain; its full sequence is MAAILGKKIGMTRIYNEKREAVPCTVIQAAPCFVSQVKTSDNDGYEAYQLSIGERKEAKVSKPMRGHYAKAGITPGYKIAEFGKDLMDADLELGSSVSVDMFKEGDKVDVRGVTKGKGFAGVVKRHNFAGGSRTHGQSDRLRAPGSVGGSSDPSRTFKGMRMAGRMGSKNVKVRGLQIVKIIPESNLLVIKGSVPGVKNSYVEIVTRNK.

A disordered region spans residues 128–156 (FAGGSRTHGQSDRLRAPGSVGGSSDPSRT).

Belongs to the universal ribosomal protein uL3 family. As to quaternary structure, part of the 50S ribosomal subunit. Forms a cluster with proteins L14 and L19.

One of the primary rRNA binding proteins, it binds directly near the 3'-end of the 23S rRNA, where it nucleates assembly of the 50S subunit. This Prosthecochloris aestuarii (strain DSM 271 / SK 413) protein is Large ribosomal subunit protein uL3.